The following is a 395-amino-acid chain: Chalcone synthase 1 (395 aa).

An N-acetylvaline modification is found at valine 2. Cysteine 169 is an active-site residue.

Belongs to the thiolase-like superfamily. Chalcone/stilbene synthases family.

The catalysed reaction is (E)-4-coumaroyl-CoA + 3 malonyl-CoA + 3 H(+) = 2',4,4',6'-tetrahydroxychalcone + 3 CO2 + 4 CoA. Its pathway is secondary metabolite biosynthesis; flavonoid biosynthesis. In terms of biological role, the primary product of this enzyme is 4,2',4',6'-tetrahydroxychalcone (also termed naringenin-chalcone or chalcone) which can under specific conditions spontaneously isomerize into naringenin. The protein is Chalcone synthase 1 (CHS1) of Sinapis alba (White mustard).